The chain runs to 265 residues: Hydroxyethylthiazole kinase (265 aa).

Residue methionine 43 coordinates substrate. ATP contacts are provided by lysine 118 and threonine 165. Residue glycine 192 coordinates substrate.

Belongs to the Thz kinase family. Mg(2+) is required as a cofactor.

It carries out the reaction 5-(2-hydroxyethyl)-4-methylthiazole + ATP = 4-methyl-5-(2-phosphooxyethyl)-thiazole + ADP + H(+). The protein operates within cofactor biosynthesis; thiamine diphosphate biosynthesis; 4-methyl-5-(2-phosphoethyl)-thiazole from 5-(2-hydroxyethyl)-4-methylthiazole: step 1/1. In terms of biological role, catalyzes the phosphorylation of the hydroxyl group of 4-methyl-5-beta-hydroxyethylthiazole (THZ). This is Hydroxyethylthiazole kinase from Pyrococcus abyssi (strain GE5 / Orsay).